We begin with the raw amino-acid sequence, 756 residues long: Xylosyl- and glucuronyltransferase LARGE1 (756 aa).

Topologically, residues 1–10 are cytoplasmic; that stretch reads MLGICRGRRK. The chain crosses the membrane as a helical; Signal-anchor for type II membrane protein span at residues 11 to 31; that stretch reads FLAASLTLLCIPAITWIYLFA. At 32 to 756 the chain is on the lumenal side; it reads GSFEDGKPVS…LKYLTAENNS (725 aa). 2 disordered regions span residues 43–64 and 82–108; these read SPLE…ERES and QLSL…EEGT. Residues 44 to 58 are compositionally biased toward polar residues; sequence PLESQAHSPRYTASS. Residues 53–95 adopt a coiled-coil conformation; the sequence is RYTASSQRERESLEVRVREVEEENRALRRQLSLAQGQSPAHHR. 3 N-linked (GlcNAc...) asparagine glycosylation sites follow: N97, N122, and N148. The interval 138–413 is xylosyltransferase activity; sequence IHVAIVCAGY…FLEYDGNLLR (276 aa). Mn(2+) is bound by residues D242 and D244. N-linked (GlcNAc...) asparagine glycosylation is present at N272. The glucuronyltransferase activity stretch occupies residues 414–756; the sequence is RELFGCPSET…LKYLTAENNS (343 aa). Mn(2+)-binding residues include D563 and D565.

It in the C-terminal section; belongs to the glycosyltransferase 49 family. In the N-terminal section; belongs to the glycosyltransferase 8 family. Interacts with DAG1 (via the N-terminal domain of alpha-DAG1); the interaction increases binding of DAG1 to laminin. Interacts with B4GAT1. The cofactor is Mn(2+). In terms of tissue distribution, ubiquitous. Highest expression in heart, diaphragm and brain, where it is especially found in cerebral cortex, hippocampus, and trigeminal ganglion.

The protein localises to the golgi apparatus membrane. The enzyme catalyses 3-O-[beta-D-GlcA-(1-&gt;3)-beta-D-Xyl-(1-&gt;4)-Rib-ol-P-Rib-ol-P-3-beta-D-GalNAc-(1-&gt;3)-beta-D-GlcNAc-(1-&gt;4)-(O-6-P-alpha-D-Man)]-Thr-[protein] + UDP-alpha-D-xylose = 3-O-[alpha-D-Xyl-(1-&gt;3)-beta-D-GlcA-(1-&gt;4)-beta-D-Xyl-(1-&gt;4)-Rib-ol-P-Rib-ol-P-3-beta-D-GalNAc-(1-&gt;3)-beta-D-GlcNAc-(1-&gt;4)-(O-6-P-alpha-D-Man)]-Thr-[protein] + UDP + H(+). It catalyses the reaction 3-O-{(1-&gt;[3)-alpha-D-Xyl-(1-&gt;3)-beta-D-GlcA-(1-&gt;](n)-4)-beta-D-Xyl-(1-&gt;4)-Rib-ol-P-Rib-ol-P-3-beta-D-GalNAc-(1-&gt;3)-beta-D-GlcNAc-(1-&gt;4)-O-6-P-alpha-D-Man}-L-Thr-[protein] + UDP-alpha-D-glucuronate = 3-O-{beta-D-GlcA-(1-&gt;[3)-alpha-D-Xyl-(1-&gt;3)-beta-D-GlcA-(1-&gt;](n)-4)-beta-D-Xyl-(1-&gt;4)-Rib-ol-P-Rib-ol-P-3-beta-D-GalNAc-(1-&gt;3)-beta-D-GlcNAc-(1-&gt;4)-O-6-P-alpha-D-Man}-L-Thr-[protein] + UDP + H(+). It carries out the reaction 3-O-{beta-D-GlcA-(1-&gt;[3)-alpha-D-Xyl-(1-&gt;3)-beta-D-GlcA-(1-&gt;](n)-4)-beta-D-Xyl-(1-&gt;4)-Rib-ol-P-Rib-ol-P-3-beta-D-GalNAc-(1-&gt;3)-beta-D-GlcNAc-(1-&gt;4)-O-6-P-alpha-D-Man}-L-Thr-[protein] + UDP-alpha-D-xylose = 3-O-{(1-&gt;[3)-alpha-D-Xyl-(1-&gt;3)-beta-D-GlcA-(1-&gt;](n+1)-4)-beta-D-Xyl-(1-&gt;4)-Rib-ol-P-Rib-ol-P-3-beta-D-GalNAc-(1-&gt;3)-beta-D-GlcNAc-(1-&gt;4)-O-6-P-alpha-D-Man}-L-Thr-[protein] + UDP + H(+). The protein operates within protein modification; protein glycosylation. Functionally, bifunctional glycosyltransferase with both alpha-1,3-xylosyltransferase and beta-1,3-glucuronyltransferase activities involved in the maturation of alpha-dystroglycan (DAG1) by glycosylation leading to DAG1 binding to laminin G-like domain-containing extracellular proteins with high affinity. Elongates the glucuronyl-beta-1,4-xylose-beta disaccharide primer structure initiated by B4GAT1 by adding repeating units [-3-Xylose-alpha-1,3-GlcA-beta-1-] to produce a heteropolysaccharide. Requires the phosphorylation of core M3 (O-mannosyl trisaccharide) by POMK to elongate the glucuronyl-beta-1,4-xylose-beta disaccharide primer. Plays a key role in skeletal muscle function and regeneration. The chain is Xylosyl- and glucuronyltransferase LARGE1 from Mus musculus (Mouse).